The sequence spans 83 residues: Large ribosomal subunit protein bL27 (83 aa).

The tract at residues 1–20 (MAHKKGASSSRNGRDSNPQY) is disordered. The segment covering 7 to 19 (ASSSRNGRDSNPQ) has biased composition (polar residues).

The protein belongs to the bacterial ribosomal protein bL27 family.

The sequence is that of Large ribosomal subunit protein bL27 from Bifidobacterium animalis subsp. lactis (strain AD011).